The chain runs to 492 residues: Ribose import ATP-binding protein RbsA (492 aa).

2 ABC transporter domains span residues 3 to 239 and 238 to 492; these read IDMR…VGRK and RKLE…TGGK. 35 to 42 contributes to the ATP binding site; the sequence is GENGAGKS.

It belongs to the ABC transporter superfamily. Ribose importer (TC 3.A.1.2.1) family. The complex is composed of an ATP-binding protein (RbsA), two transmembrane proteins (RbsC) and a solute-binding protein (RbsB).

The protein resides in the cell membrane. It catalyses the reaction D-ribose(out) + ATP + H2O = D-ribose(in) + ADP + phosphate + H(+). In terms of biological role, part of the ABC transporter complex RbsABC involved in ribose import. Responsible for energy coupling to the transport system. The protein is Ribose import ATP-binding protein RbsA of Streptococcus agalactiae serotype III (strain NEM316).